We begin with the raw amino-acid sequence, 388 residues long: Flap endonuclease 1 (388 aa).

Positions 1-104 are N-domain; that stretch reads MGILGLSKLI…GELAKRAERR (104 aa). Residue Asp34 coordinates Mg(2+). Arg47 and Arg70 together coordinate DNA. Mg(2+) contacts are provided by Asp86, Glu158, Glu160, Asp179, and Asp181. The I-domain stretch occupies residues 122–253; it reads EIEKFNRRLV…KRAIELIKTY (132 aa). Glu158 is a DNA binding site. DNA contacts are provided by Gly231 and Asp233. Asp233 is a Mg(2+) binding site. Positions 336–344 are interaction with PCNA; the sequence is TQVRLDSFF. The disordered stretch occupies residues 351–388; sequence PNATAAAKRKAEEIKKSANNKKAKTSGGSGAARGRRPK.

The protein belongs to the XPG/RAD2 endonuclease family. FEN1 subfamily. Interacts with PCNA. Three molecules of FEN1 bind to one PCNA trimer with each molecule binding to one PCNA monomer. PCNA stimulates the nuclease activity without altering cleavage specificity. Requires Mg(2+) as cofactor. In terms of processing, phosphorylated. Phosphorylation upon DNA damage induces relocalization to the nuclear plasma.

Its subcellular location is the nucleus. The protein resides in the nucleolus. The protein localises to the nucleoplasm. It is found in the mitochondrion. Its function is as follows. Structure-specific nuclease with 5'-flap endonuclease and 5'-3' exonuclease activities involved in DNA replication and repair. During DNA replication, cleaves the 5'-overhanging flap structure that is generated by displacement synthesis when DNA polymerase encounters the 5'-end of a downstream Okazaki fragment. It enters the flap from the 5'-end and then tracks to cleave the flap base, leaving a nick for ligation. Also involved in the long patch base excision repair (LP-BER) pathway, by cleaving within the apurinic/apyrimidinic (AP) site-terminated flap. Acts as a genome stabilization factor that prevents flaps from equilibrating into structures that lead to duplications and deletions. Also possesses 5'-3' exonuclease activity on nicked or gapped double-stranded DNA, and exhibits RNase H activity. Also involved in replication and repair of rDNA and in repairing mitochondrial DNA. This is Flap endonuclease 1 from Drosophila mojavensis (Fruit fly).